Here is a 686-residue protein sequence, read N- to C-terminus: WD repeat-containing protein 93 (686 aa).

A compositionally biased stretch (polar residues) spans 1–10 (MSFPRGSQTQ). A disordered region spans residues 1–40 (MSFPRGSQTQKIKHPIGTRKGPLEVPPPTEKDWPKDDEQD). Residues 29–40 (TEKDWPKDDEQD) show a composition bias toward basic and acidic residues. The WD repeat unit spans residues 410 to 449 (PCAAPIAVSQLSCSSSYLVLACEDGVLTLWDLAKGFPLGV).

In Homo sapiens (Human), this protein is WD repeat-containing protein 93 (WDR93).